A 320-amino-acid chain; its full sequence is uncharacterized protein (320 aa).

This is an uncharacterized protein from Orgyia pseudotsugata (Douglas-fir tussock moth).